We begin with the raw amino-acid sequence, 362 residues long: Methylthioribose-1-phosphate isomerase (362 aa).

Substrate contacts are provided by residues 53 to 55, arginine 90, and glutamine 201; that span reads RGA. Aspartate 241 acts as the Proton donor in catalysis. 251–252 is a substrate binding site; that stretch reads NK.

Belongs to the eIF-2B alpha/beta/delta subunits family. MtnA subfamily.

It carries out the reaction 5-(methylsulfanyl)-alpha-D-ribose 1-phosphate = 5-(methylsulfanyl)-D-ribulose 1-phosphate. It functions in the pathway amino-acid biosynthesis; L-methionine biosynthesis via salvage pathway; L-methionine from S-methyl-5-thio-alpha-D-ribose 1-phosphate: step 1/6. Catalyzes the interconversion of methylthioribose-1-phosphate (MTR-1-P) into methylthioribulose-1-phosphate (MTRu-1-P). The sequence is that of Methylthioribose-1-phosphate isomerase from Dechloromonas aromatica (strain RCB).